Reading from the N-terminus, the 189-residue chain is Glycerol-3-phosphate acyltransferase (189 aa).

5 helical membrane-spanning segments follow: residues 1 to 21 (MVWL…AVLL), 50 to 70 (KLAI…VLVA), 72 to 92 (WLGL…IGHL), 111 to 131 (MLLG…LLTF), and 151 to 171 (LLAW…ALIV).

Belongs to the PlsY family. In terms of assembly, probably interacts with PlsX.

The protein resides in the cell inner membrane. The catalysed reaction is an acyl phosphate + sn-glycerol 3-phosphate = a 1-acyl-sn-glycero-3-phosphate + phosphate. Its pathway is lipid metabolism; phospholipid metabolism. In terms of biological role, catalyzes the transfer of an acyl group from acyl-phosphate (acyl-PO(4)) to glycerol-3-phosphate (G3P) to form lysophosphatidic acid (LPA). This enzyme utilizes acyl-phosphate as fatty acyl donor, but not acyl-CoA or acyl-ACP. The protein is Glycerol-3-phosphate acyltransferase of Pseudomonas paraeruginosa (strain DSM 24068 / PA7) (Pseudomonas aeruginosa (strain PA7)).